The chain runs to 331 residues: Probable protein phosphatase 2C 72 (331 aa).

The 282-residue stretch at leucine 43–leucine 324 folds into the PPM-type phosphatase domain. Aspartate 78, glycine 79, aspartate 268, and aspartate 315 together coordinate Mn(2+).

It belongs to the PP2C family. It depends on Mg(2+) as a cofactor. The cofactor is Mn(2+).

It catalyses the reaction O-phospho-L-seryl-[protein] + H2O = L-seryl-[protein] + phosphate. The catalysed reaction is O-phospho-L-threonyl-[protein] + H2O = L-threonyl-[protein] + phosphate. The protein is Probable protein phosphatase 2C 72 of Arabidopsis thaliana (Mouse-ear cress).